Consider the following 234-residue polypeptide: Bromodomain-containing protein DDB_G0271118 (234 aa).

Residues 1–60 (MDLGTIKGELDNNGYSTIKDFTADVRLMFENALTYNADSSPIWKHAKTLLYFHRKHDEHV) form the Bromo domain. The span at 134-194 (NNNSNNNNNN…SSSSSSSSSS (61 aa)) shows a compositional bias: low complexity. The interval 134–209 (NNNSNNNNNN…KKYSDEERRN (76 aa)) is disordered.

This chain is Bromodomain-containing protein DDB_G0271118, found in Dictyostelium discoideum (Social amoeba).